The following is a 419-amino-acid chain: Argininosuccinate synthase (419 aa).

Position 9-17 (9-17 (AYSGGLDTS)) interacts with ATP. Tyr87 contacts L-citrulline. An ATP-binding site is contributed by Gly117. Residues Thr119, Asn123, and Asp124 each contribute to the L-aspartate site. Asn123 is an L-citrulline binding site. The L-citrulline site is built by Arg127, Ser175, Ser184, Glu260, and Tyr272.

Belongs to the argininosuccinate synthase family. Type 1 subfamily. As to quaternary structure, homotetramer.

It is found in the cytoplasm. It catalyses the reaction L-citrulline + L-aspartate + ATP = 2-(N(omega)-L-arginino)succinate + AMP + diphosphate + H(+). It functions in the pathway amino-acid biosynthesis; L-arginine biosynthesis; L-arginine from L-ornithine and carbamoyl phosphate: step 2/3. The protein is Argininosuccinate synthase of Brevibacillus brevis (strain 47 / JCM 6285 / NBRC 100599).